The following is a 349-amino-acid chain: UDP-N-acetylenolpyruvoylglucosamine reductase (349 aa).

The FAD-binding PCMH-type domain occupies 26 to 197; it reads FDARARVAAR…VAVTFRLPKA (172 aa). R173 is a catalytic residue. The active-site Proton donor is the S249. E345 is an active-site residue.

This sequence belongs to the MurB family. Requires FAD as cofactor.

The protein resides in the cytoplasm. It catalyses the reaction UDP-N-acetyl-alpha-D-muramate + NADP(+) = UDP-N-acetyl-3-O-(1-carboxyvinyl)-alpha-D-glucosamine + NADPH + H(+). It functions in the pathway cell wall biogenesis; peptidoglycan biosynthesis. Functionally, cell wall formation. This Burkholderia pseudomallei (strain 1710b) protein is UDP-N-acetylenolpyruvoylglucosamine reductase.